The sequence spans 260 residues: NH(3)-dependent NAD(+) synthetase (260 aa).

31–38 (GLSGGLDS) serves as a coordination point for ATP. D37 is a binding site for Mg(2+). R112 provides a ligand contact to deamido-NAD(+). T132 contributes to the ATP binding site. E137 provides a ligand contact to Mg(2+). Positions 161 and 183 each coordinate ATP.

This sequence belongs to the NAD synthetase family. In terms of assembly, homodimer.

It carries out the reaction deamido-NAD(+) + NH4(+) + ATP = AMP + diphosphate + NAD(+) + H(+). The protein operates within cofactor biosynthesis; NAD(+) biosynthesis; NAD(+) from deamido-NAD(+) (ammonia route): step 1/1. In terms of biological role, catalyzes the ATP-dependent amidation of deamido-NAD to form NAD. Uses ammonia as a nitrogen source. This Helicobacter pylori (strain G27) protein is NH(3)-dependent NAD(+) synthetase.